The sequence spans 382 residues: Anhydro-N-acetylmuramic acid kinase (382 aa).

An ATP-binding site is contributed by 22-29; sequence GTSMDGVD.

Belongs to the anhydro-N-acetylmuramic acid kinase family.

It carries out the reaction 1,6-anhydro-N-acetyl-beta-muramate + ATP + H2O = N-acetyl-D-muramate 6-phosphate + ADP + H(+). It functions in the pathway amino-sugar metabolism; 1,6-anhydro-N-acetylmuramate degradation. The protein operates within cell wall biogenesis; peptidoglycan recycling. Functionally, catalyzes the specific phosphorylation of 1,6-anhydro-N-acetylmuramic acid (anhMurNAc) with the simultaneous cleavage of the 1,6-anhydro ring, generating MurNAc-6-P. Is required for the utilization of anhMurNAc either imported from the medium or derived from its own cell wall murein, and thus plays a role in cell wall recycling. The chain is Anhydro-N-acetylmuramic acid kinase from Burkholderia cenocepacia (strain ATCC BAA-245 / DSM 16553 / LMG 16656 / NCTC 13227 / J2315 / CF5610) (Burkholderia cepacia (strain J2315)).